A 438-amino-acid chain; its full sequence is Trigger factor (438 aa).

The PPIase FKBP-type domain occupies 163–248; it reads GDKLNIDFEG…VKRIETTEAR (86 aa).

Belongs to the FKBP-type PPIase family. Tig subfamily.

The protein localises to the cytoplasm. The catalysed reaction is [protein]-peptidylproline (omega=180) = [protein]-peptidylproline (omega=0). In terms of biological role, involved in protein export. Acts as a chaperone by maintaining the newly synthesized protein in an open conformation. Functions as a peptidyl-prolyl cis-trans isomerase. This Syntrophomonas wolfei subsp. wolfei (strain DSM 2245B / Goettingen) protein is Trigger factor.